The primary structure comprises 196 residues: ATP-dependent Clp protease proteolytic subunit (196 aa).

The active-site Nucleophile is the serine 96. Histidine 121 is a catalytic residue.

It belongs to the peptidase S14 family. Fourteen ClpP subunits assemble into 2 heptameric rings which stack back to back to give a disk-like structure with a central cavity, resembling the structure of eukaryotic proteasomes.

The protein resides in the cytoplasm. It carries out the reaction Hydrolysis of proteins to small peptides in the presence of ATP and magnesium. alpha-casein is the usual test substrate. In the absence of ATP, only oligopeptides shorter than five residues are hydrolyzed (such as succinyl-Leu-Tyr-|-NHMec, and Leu-Tyr-Leu-|-Tyr-Trp, in which cleavage of the -Tyr-|-Leu- and -Tyr-|-Trp bonds also occurs).. In terms of biological role, cleaves peptides in various proteins in a process that requires ATP hydrolysis. Has a chymotrypsin-like activity. Plays a major role in the degradation of misfolded proteins. In Streptococcus sanguinis (strain SK36), this protein is ATP-dependent Clp protease proteolytic subunit.